We begin with the raw amino-acid sequence, 759 residues long: LPS-assembly protein LptD (759 aa).

The signal sequence occupies residues 1 to 45; that stretch reads MKPLKLELNPRDFNHYQAAFLPYRMKIKQPLHVLCFSVCSLSAVA.

The protein belongs to the LptD family. As to quaternary structure, component of the lipopolysaccharide transport and assembly complex. Interacts with LptE and LptA.

Its subcellular location is the cell outer membrane. In terms of biological role, together with LptE, is involved in the assembly of lipopolysaccharide (LPS) at the surface of the outer membrane. This is LPS-assembly protein LptD from Pseudoalteromonas atlantica (strain T6c / ATCC BAA-1087).